Reading from the N-terminus, the 730-residue chain is Elongation factor 2 (730 aa).

In terms of domain architecture, tr-type G spans aspartate 18 to valine 238. GTP-binding positions include alanine 27–threonine 34, aspartate 93–histidine 97, and asparagine 147–aspartate 150. The residue at position 595 (histidine 595) is a Diphthamide. A disordered region spans residues arginine 711 to glutamate 730.

The protein belongs to the TRAFAC class translation factor GTPase superfamily. Classic translation factor GTPase family. EF-G/EF-2 subfamily.

The protein localises to the cytoplasm. Its function is as follows. Catalyzes the GTP-dependent ribosomal translocation step during translation elongation. During this step, the ribosome changes from the pre-translocational (PRE) to the post-translocational (POST) state as the newly formed A-site-bound peptidyl-tRNA and P-site-bound deacylated tRNA move to the P and E sites, respectively. Catalyzes the coordinated movement of the two tRNA molecules, the mRNA and conformational changes in the ribosome. The protein is Elongation factor 2 of Cenarchaeum symbiosum (strain A).